Here is a 173-residue protein sequence, read N- to C-terminus: Nicotinamide-nucleotide adenylyltransferase (173 aa).

It belongs to the archaeal NMN adenylyltransferase family.

The protein localises to the cytoplasm. It catalyses the reaction beta-nicotinamide D-ribonucleotide + ATP + H(+) = diphosphate + NAD(+). It participates in cofactor biosynthesis; NAD(+) biosynthesis; NAD(+) from nicotinamide D-ribonucleotide: step 1/1. The chain is Nicotinamide-nucleotide adenylyltransferase (ffdC) from Methanolobus tindarius.